The sequence spans 101 residues: Small ribosomal subunit protein uS14 (101 aa).

The protein belongs to the universal ribosomal protein uS14 family. Part of the 30S ribosomal subunit. Contacts proteins S3 and S10.

Binds 16S rRNA, required for the assembly of 30S particles and may also be responsible for determining the conformation of the 16S rRNA at the A site. This is Small ribosomal subunit protein uS14 from Corynebacterium efficiens (strain DSM 44549 / YS-314 / AJ 12310 / JCM 11189 / NBRC 100395).